Consider the following 121-residue polypeptide: HTH-type transcriptional regulator MerD (121 aa).

In terms of domain architecture, HTH merR-type spans Ala3–Ala72. The segment at residues Val6–Leu25 is a DNA-binding region (H-T-H motif).

The sequence is that of HTH-type transcriptional regulator MerD (merD) from Pseudomonas aeruginosa.